The following is a 405-amino-acid chain: Replication factor C large subunit (405 aa).

47–54 is an ATP binding site; sequence GPPGVGKT.

This sequence belongs to the activator 1 small subunits family. RfcL subfamily. Heteromultimer composed of small subunits (RfcS) and large subunits (RfcL).

In terms of biological role, part of the RFC clamp loader complex which loads the PCNA sliding clamp onto DNA. This chain is Replication factor C large subunit, found in Saccharolobus islandicus (strain M.16.27) (Sulfolobus islandicus).